The sequence spans 334 residues: N-acetyl-gamma-glutamyl-phosphate reductase (334 aa).

C142 is a catalytic residue.

Belongs to the NAGSA dehydrogenase family. Type 1 subfamily.

It localises to the cytoplasm. It carries out the reaction N-acetyl-L-glutamate 5-semialdehyde + phosphate + NADP(+) = N-acetyl-L-glutamyl 5-phosphate + NADPH + H(+). It functions in the pathway amino-acid biosynthesis; L-arginine biosynthesis; N(2)-acetyl-L-ornithine from L-glutamate: step 3/4. Catalyzes the NADPH-dependent reduction of N-acetyl-5-glutamyl phosphate to yield N-acetyl-L-glutamate 5-semialdehyde. The polypeptide is N-acetyl-gamma-glutamyl-phosphate reductase (Pelodictyon phaeoclathratiforme (strain DSM 5477 / BU-1)).